A 597-amino-acid polypeptide reads, in one-letter code: Cytosolic phospholipase A2 gamma (597 aa).

In terms of domain architecture, PLA2c spans 1-597 (MELSSGVCPA…FKKSHNISKD (597 aa)). The active-site Nucleophile is the Ser-83. The Proton acceptor role is filled by Asp-417. A disordered region spans residues 576–597 (RVKDPQGSQTVEFKKSHNISKD). The segment covering 587-597 (EFKKSHNISKD) has biased composition (basic and acidic residues).

In terms of tissue distribution, highly expressed in ovary, where it localizes to oocytes in preantral and antral stage follicles (at protein level). Not detected in other tissues tested.

Its subcellular location is the nucleus. It localises to the nucleoplasm. The protein resides in the nucleus envelope. The protein localises to the cytoplasm. It is found in the cell cortex. Its subcellular location is the cytoskeleton. It localises to the spindle. The catalysed reaction is a 1,2-diacyl-sn-glycero-3-phosphocholine + H2O = a 1-acyl-sn-glycero-3-phosphocholine + a fatty acid + H(+). It carries out the reaction a 1-O-alkyl-2-acyl-sn-glycero-3-phosphocholine + H2O = a 1-O-alkyl-sn-glycero-3-phosphocholine + a fatty acid + H(+). It catalyses the reaction 1,2-dihexadecanoyl-sn-glycero-3-phosphocholine + H2O = 1-hexadecanoyl-sn-glycero-3-phosphocholine + hexadecanoate + H(+). The enzyme catalyses 1-hexadecanoyl-2-(9Z-octadecenoyl)-sn-glycero-3-phosphocholine + H2O = 1-hexadecanoyl-sn-glycero-3-phosphocholine + (9Z)-octadecenoate + H(+). The catalysed reaction is 1-hexadecanoyl-2-(9Z,12Z-octadecadienoyl)-sn-glycero-3-phosphocholine + H2O = (9Z,12Z)-octadecadienoate + 1-hexadecanoyl-sn-glycero-3-phosphocholine + H(+). It carries out the reaction 1-hexadecanoyl-2-(5Z,8Z,11Z,14Z-eicosatetraenoyl)-sn-glycero-3-phosphocholine + H2O = 1-hexadecanoyl-sn-glycero-3-phosphocholine + (5Z,8Z,11Z,14Z)-eicosatetraenoate + H(+). It catalyses the reaction 1-O-hexadecyl-2-(5Z,8Z,11Z,14Z)-eicosatetraenoyl-sn-glycero-3-phosphocholine + H2O = 1-O-hexadecyl-sn-glycero-3-phosphocholine + (5Z,8Z,11Z,14Z)-eicosatetraenoate + H(+). The enzyme catalyses 1-hexadecanoyl-2-(5Z,8Z,11Z,14Z-eicosatetraenoyl)-sn-glycero-3-phosphocholine + H2O = 2-(5Z,8Z,11Z,14Z)-eicosatetraenoyl-sn-glycero-3-phosphocholine + hexadecanoate + H(+). The catalysed reaction is a 1-acyl-sn-glycero-3-phosphocholine + H2O = sn-glycerol 3-phosphocholine + a fatty acid + H(+). It carries out the reaction 1-hexadecanoyl-sn-glycero-3-phosphocholine + H2O = sn-glycerol 3-phosphocholine + hexadecanoate + H(+). It catalyses the reaction 2 1-hexadecanoyl-sn-glycero-3-phosphocholine = 1,2-dihexadecanoyl-sn-glycero-3-phosphocholine + sn-glycerol 3-phosphocholine. The enzyme catalyses 1-hexadecanoyl-sn-glycero-3-phosphoethanolamine + 1-hexadecanoyl-sn-glycero-3-phosphocholine = 1,2-dihexadecanoyl-sn-glycero-3-phosphoethanolamine + sn-glycerol 3-phosphocholine. The catalysed reaction is 1-hexadecanoyl-sn-glycero-3-phosphoethanolamine + 1-hexadecanoyl-sn-glycero-3-phosphocholine = sn-glycero-3-phosphoethanolamine + 1,2-dihexadecanoyl-sn-glycero-3-phosphocholine. It carries out the reaction 2 1-hexadecanoyl-sn-glycero-3-phosphoethanolamine = 1,2-dihexadecanoyl-sn-glycero-3-phosphoethanolamine + sn-glycero-3-phosphoethanolamine. It catalyses the reaction 1-O-hexadecyl-sn-glycero-3-phosphocholine + 1-hexadecanoyl-sn-glycero-3-phosphocholine = 1-O-hexadecyl-2-hexadecanoyl-sn-glycero-3-phosphocholine + sn-glycerol 3-phosphocholine. The enzyme catalyses a 1-O-(1Z-alkenyl)-sn-glycero-3-phosphoethanolamine + 1-hexadecanoyl-sn-glycero-3-phosphocholine = 1-O-(1Z)-alkenyl-2-hexadecanoyl-sn-glycero-3-phosphoethanolamine + sn-glycerol 3-phosphocholine. The catalysed reaction is 1-O-hexadecyl-sn-glycero-3-phosphocholine + 1-hexadecanoyl-sn-glycero-3-phosphoethanolamine = 1-O-hexadecyl-2-hexadecanoyl-sn-glycero-3-phosphocholine + sn-glycero-3-phosphoethanolamine. It carries out the reaction 1-octadecanoyl-2-(5Z,8Z,11Z,14Z)-eicosatetraenoyl-sn-glycero-3-phosphoethanolamine + 1-hexadecanoyl-sn-glycero-3-phosphocholine = 1-octadecanoyl-sn-glycero-3-phosphoethanolamine + 1-hexadecanoyl-2-(5Z,8Z,11Z,14Z-eicosatetraenoyl)-sn-glycero-3-phosphocholine. It catalyses the reaction 1-octadecanoyl-2-(5Z,8Z,11Z,14Z)-eicosatetraenoyl-sn-glycero-3-phosphoethanolamine + 1-O-hexadecyl-sn-glycero-3-phosphocholine = 1-octadecanoyl-sn-glycero-3-phosphoethanolamine + 1-O-hexadecyl-2-(5Z,8Z,11Z,14Z)-eicosatetraenoyl-sn-glycero-3-phosphocholine. The enzyme catalyses 1-hexadecanoyl-2-(9Z,12Z-octadecadienoyl)-sn-glycero-3-phosphocholine + a 1-O-(1Z-alkenyl)-sn-glycero-3-phosphoethanolamine = 1-O-(1Z-alkenyl)-2-(9Z,12Z-octadecadienoyl)-sn-glycero-3-phosphoethanolamine + 1-hexadecanoyl-sn-glycero-3-phosphocholine. The catalysed reaction is 1-hexadecanoyl-2-(5Z,8Z,11Z,14Z-eicosatetraenoyl)-sn-glycero-3-phosphocholine + a 1-O-(1Z-alkenyl)-sn-glycero-3-phosphoethanolamine = 1-O-(1Z)-alkenyl-2-(5Z,8Z,11Z,14Z)-eicosatetraenoyl-sn-glycero-3-phosphoethanolamine + 1-hexadecanoyl-sn-glycero-3-phosphocholine. In terms of biological role, calcium-independent phospholipase, lysophospholipase and O-acyltransferase involved in phospholipid remodeling. Preferentially hydrolyzes the ester bond of the fatty acyl group attached at sn-2 position of phospholipids with choline and ethanolamine head groups, producing lysophospholipids that are used in deacylation-reacylation cycles. Transfers the sn-1 fatty acyl from one lysophospholipid molecule to the sn-2 position of another lysophospholipid to form diacyl, alkylacyl and alkenylacyl glycerophospholipids. Cleaves ester bonds but not alkyl or alkenyl ether bonds at the sn-1 position of lysophospholipids. Catalyzes sn-2 fatty acyl transfer from phospholipids to the sn-2 position of 1-O-alkyl or 1-O-alkenyl lysophospholipids with lower efficiency. This is Cytosolic phospholipase A2 gamma from Mus musculus (Mouse).